A 736-amino-acid polypeptide reads, in one-letter code: MNQNLKNTSWADRIGSDDQERKANSSEVSQSPPPNNSFESSMDSQFSYAHSNKSSISFESIQTTERLLDKLDLSLEDELILQEALLEEENASRNSQLSQTSGPTLCMPASEFPSLRYRTNPSPTYIQARDRSLIIDNLKEKDSTLRGKYSSGKVERHLPVKSRYSYIVEEDYDSETFSGMKPQMNRNEKDYKYPNLENGNRSTNSPNPFNFEKYRIENTRLHHLYPTLISDNNTSVDNNANSKNNRTTSNNINTSTKTDRISEKQSCPNEFTTTQKSNCLYRNGSSTSTNTSFSEVGQLSKPKTQSSFESESSSFSKLKLTKSDTTPIKPSPKRSNSSTSTITKTNTMTNDISLPPTPPYKAHKKKTSLNSLKKLFKSPRTRAKNKKDLESEGSSPIRSATNSLDFSGENIQLPSTSSTINNSSPHLARYIFPPNPVFHFKTASTPQSSTDKKKNSKARPNRTHLRTFSDFHTTEKDSKIGELSALTEQSNKPYHPKVRRRTLSLDGMLPNNSTQCMDSFSHKKEGSNATSKCGKLKFHPEPYDNDESSHIGQAITMRHQGKLEESAQRLKKACACGNKTAFLLYGLALRHGCGVDKNLKLSLGYLMAATDIKSFAAEVLDLDINPLNFASMDDIPDIAPEPTAPALYECGMAYLKGLGMDHPDERKGLKFLEKAALLGHVDSMCLSGTIWSKTSNVKKRDLARAAAWFRIADKKGANLLGSDWIYKEKYMKQGPK.

The span at 1-10 (MNQNLKNTSW) shows a compositional bias: polar residues. Disordered regions lie at residues 1–46 (MNQN…DSQF), 178–208 (SGMK…SPNP), 229–410 (ISDN…SGEN), and 440–461 (FKTA…ARPN). Residues 14–24 (IGSDDQERKAN) show a composition bias toward basic and acidic residues. Polar residues-rich tracts occupy residues 25 to 46 (SSEV…DSQF) and 197 to 208 (ENGNRSTNSPNP). Residues 238 to 256 (NNANSKNNRTTSNNINTST) show a composition bias toward low complexity. Polar residues predominate over residues 264–284 (KQSCPNEFTTTQKSNCLYRNG). 3 stretches are compositionally biased toward low complexity: residues 285-294 (SSTSTNTSFS), 303-318 (KTQS…FSKL), and 335-350 (SNSS…TMTN). Basic residues predominate over residues 374 to 385 (KLFKSPRTRAKN). The segment covering 392–410 (EGSSPIRSATNSLDFSGEN) has biased composition (polar residues).

The polypeptide is Protein DSF2 (DSF2) (Saccharomyces cerevisiae (strain ATCC 204508 / S288c) (Baker's yeast)).